The following is a 159-amino-acid chain: Serine-protein kinase RsbW (159 aa).

The protein belongs to the anti-sigma-factor family.

It catalyses the reaction L-seryl-[protein] + ATP = O-phospho-L-seryl-[protein] + ADP + H(+). The catalysed reaction is L-threonyl-[protein] + ATP = O-phospho-L-threonyl-[protein] + ADP + H(+). Functionally, negative regulator of sigma-B activity. Phosphorylates and inactivates its specific antagonist protein, RsbV. Upon phosphorylation of RsbV, RsbW is released and binds to sigma-B, thereby blocking its ability to form an RNA polymerase holoenzyme (E-sigma-B). The polypeptide is Serine-protein kinase RsbW (Staphylococcus aureus (strain MRSA252)).